The following is a 218-amino-acid chain: Adenylate kinase (218 aa).

10-15 (GAGKGT) contacts ATP. The interval 30 to 59 (STGDMLRAAIAKGTPLGLSAQKIMESGGLV) is NMP. AMP contacts are provided by residues Thr31, Arg36, 57 to 59 (GLV), 85 to 88 (GFPR), and Gln92. Residues 122–159 (GRRIHQPSGRVYHVVNQPPKNPGVDDITGEPLIQRDDD) are LID. Residues Arg123 and 132 to 133 (VY) each bind ATP. Residues Arg156 and Arg167 each contribute to the AMP site. Gly203 provides a ligand contact to ATP.

It belongs to the adenylate kinase family. In terms of assembly, monomer.

Its subcellular location is the cytoplasm. The enzyme catalyses AMP + ATP = 2 ADP. It participates in purine metabolism; AMP biosynthesis via salvage pathway; AMP from ADP: step 1/1. In terms of biological role, catalyzes the reversible transfer of the terminal phosphate group between ATP and AMP. Plays an important role in cellular energy homeostasis and in adenine nucleotide metabolism. This chain is Adenylate kinase, found in Legionella pneumophila (strain Lens).